Here is a 292-residue protein sequence, read N- to C-terminus: Elongation factor Ts (292 aa).

Residues 82–85 (TDFV) are involved in Mg(2+) ion dislocation from EF-Tu.

This sequence belongs to the EF-Ts family.

Its subcellular location is the cytoplasm. Functionally, associates with the EF-Tu.GDP complex and induces the exchange of GDP to GTP. It remains bound to the aminoacyl-tRNA.EF-Tu.GTP complex up to the GTP hydrolysis stage on the ribosome. In Bordetella avium (strain 197N), this protein is Elongation factor Ts.